Reading from the N-terminus, the 88-residue chain is Antitoxin VapB3 (88 aa).

In terms of biological role, antitoxin component of a type II toxin-antitoxin (TA) system. This chain is Antitoxin VapB3 (vapB3), found in Mycobacterium tuberculosis (strain CDC 1551 / Oshkosh).